A 126-amino-acid polypeptide reads, in one-letter code: MSNRKLGRTSSQRKAMLRDLTTDLIINETIVTTEARAKEVRRTVEKMITLGKKGDLSARRAAAAYVRNEIAIKDFNEETETFPTALQKLFNDLAKRYEGRNGGYTRILKVEPRRGDAAPMAIIELV.

Belongs to the bacterial ribosomal protein bL17 family. In terms of assembly, part of the 50S ribosomal subunit. Contacts protein L32.

The sequence is that of Large ribosomal subunit protein bL17 from Lactococcus lactis subsp. lactis (strain IL1403) (Streptococcus lactis).